Consider the following 39-residue polypeptide: Natriuretic peptide PaNP-d (39 aa).

The propeptide occupies 1–8; that stretch reads SGSKTAEI. Residues 1–39 form a disordered region; it reads SGSKTAEIDDGCFGLPLDPIGSTSGMGCRSVPKPIPGGS. Cysteine 12 and cysteine 28 are disulfide-bonded.

It belongs to the natriuretic peptide family. Expressed by the venom gland.

Its subcellular location is the secreted. Snake venom natriuretic peptide that targets both NPR1 and NPR2. Exhibits hypotensive and vasodepressor activities. In Pseudechis australis (Mulga snake), this protein is Natriuretic peptide PaNP-d.